A 655-amino-acid chain; its full sequence is MERACEKQDSVCNLVAVFENNRTPGEAPGSHSLEDQPHSPEHQLSLSPEPWEAPPVKEALKSEFRPVSRTYLSSLKNKLSSGAWRRSCQPGVSPGPETQEPEEKRVVRELLETEQAYVARLHLLDQVFFQELLREAGRSKAFPEDVVKLIFSNISSIYRFHAQFFLPELQRRVDDWAATPRIGDVIQKLAPFLKMYSEYVKNFERAAELLATWMDKSQPFQEVVTRIQCSEASSSLTLQHHMLEPVQRIPRYELLLKEYVQKLPAQAPDLEDAQRALDMIFSAAQHSNAAIAEMERLQGLWDVYQRLGLEDDIVDPSNTLLREGPVLKISFRRSDPMERYLVLFNNMLLYCVPRVLQVGAQFQVRTRIDVAGMKVRELTDAEFPHSFLVSGKQRTLELQARSRDEMVSWMQACQAAIDQVEKRSETFKAAVQGPQGDTQEPKPQVEELGLRAPQWVRDKMVTMCMRCQEPFNALTRRRHHCRACGYVVCAKCSDYRAELKYDSNRPNRVCLTCYTFLTGNVLPQGKEDKRRGILEKEASAAPEQSLVCSFLQLIGDKCSRSLPRSWCVIPRDDPLVLYVYAAPQDTKAHTSIPLLGYQVISGPQGDPRVFQLQQSGQQYTFKAESVELQGRWVTAIKRAASGRTPEGPDEEDVSD.

Residues Ser-10, Ser-39, and Ser-47 each carry the phosphoserine modification. 2 disordered regions span residues 21–52 and 84–103; these read NRTP…EPWE and WRRS…EPEE. Over residues 32 to 41 the composition is skewed to basic and acidic residues; sequence SLEDQPHSPE. Residues 102–290 form the DH domain; sequence EEKRVVRELL…FSAAQHSNAA (189 aa). A PH 1 domain is found at 319–418; sequence TLLREGPVLK…WMQACQAAID (100 aa). An FYVE-type zinc finger spans residues 458 to 518; that stretch reads DKMVTMCMRC…VCLTCYTFLT (61 aa). Zn(2+) is bound by residues Cys-464, Cys-467, Cys-481, Cys-484, Cys-489, Cys-492, Cys-510, and Cys-513. In terms of domain architecture, PH 2 spans 544 to 641; it reads QSLVCSFLQL…WVTAIKRAAS (98 aa). The residue at position 644 (Thr-644) is a Phosphothreonine. The residue at position 654 (Ser-654) is a Phosphoserine.

As to expression, lymph node, spleen, B-lymphocytes and macrophages (at protein level). Expressed at high levels in lymph node, spleen, B-lymphocytes and bone marrow macrophages. Expressed at lower levels in mature bone marrow dendritic cells. In both immature and mature B-cells, expression is down-regulated by prior B-cell receptor signaling. Expression remains high in resting B and memory cells but declines upon differentiation into plasma cells.

It is found in the cytoplasm. The protein localises to the nucleus. The protein resides in the early endosome. Its subcellular location is the early endosome membrane. It localises to the cell projection. It is found in the ruffle membrane. The protein localises to the cytoskeleton. Its function is as follows. Activates CDC42, a member of the Ras-like family of Rho- and Rac proteins, by exchanging bound GDP for free GTP. Activates JNK1 via CDC42 but not RAC1. Binds to phosphatidylinositol 4,5-bisphosphate, phosphatidylinositol 3,4,5-trisphosphate, phosphatidylinositol 5-monophosphate, phosphatidylinositol 4-monophosphate and phosphatidylinositol 3-monophosphate. In Mus musculus (Mouse), this protein is FYVE, RhoGEF and PH domain-containing protein 2 (Fgd2).